Here is a 510-residue protein sequence, read N- to C-terminus: NAD(P)H-quinone oxidoreductase subunit 2 A, chloroplastic (510 aa).

13 helical membrane-spanning segments follow: residues 24 to 44 (LLLF…GLIL), 57 to 77 (IPWL…ALLF), 99 to 119 (IFQF…VEYI), 124 to 144 (MAIT…MFLC), 149 to 169 (LITI…LSGY), 183 to 203 (YLLM…WLYG), 227 to 247 (PGIS…LSPA), 295 to 315 (WHLL…LIAI), 323 to 343 (MLAY…IVGD), 354 to 374 (YMLF…LFGL), 395 to 415 (ALSL…AGFF), 418 to 438 (LYLF…IGLL), and 484 to 504 (MIVC…IIAI).

This sequence belongs to the complex I subunit 2 family. In terms of assembly, NDH is composed of at least 16 different subunits, 5 of which are encoded in the nucleus.

Its subcellular location is the plastid. It localises to the chloroplast thylakoid membrane. It catalyses the reaction a plastoquinone + NADH + (n+1) H(+)(in) = a plastoquinol + NAD(+) + n H(+)(out). It carries out the reaction a plastoquinone + NADPH + (n+1) H(+)(in) = a plastoquinol + NADP(+) + n H(+)(out). Functionally, NDH shuttles electrons from NAD(P)H:plastoquinone, via FMN and iron-sulfur (Fe-S) centers, to quinones in the photosynthetic chain and possibly in a chloroplast respiratory chain. The immediate electron acceptor for the enzyme in this species is believed to be plastoquinone. Couples the redox reaction to proton translocation, and thus conserves the redox energy in a proton gradient. This chain is NAD(P)H-quinone oxidoreductase subunit 2 A, chloroplastic, found in Solanum tuberosum (Potato).